Consider the following 203-residue polypeptide: Dual-action ribosomal maturation protein DarP (203 aa).

2 disordered regions span residues 1–31 (MRPMTRKTRIQPIEHAVEDDDNGYDRPSKSQ) and 183–203 (GASDSDDEAAGDAGDDHDDEA). Acidic residues predominate over residues 186 to 203 (DSDDEAAGDAGDDHDDEA).

It belongs to the DarP family.

It localises to the cytoplasm. Member of a network of 50S ribosomal subunit biogenesis factors which assembles along the 30S-50S interface, preventing incorrect 23S rRNA structures from forming. Promotes peptidyl transferase center (PTC) maturation. The chain is Dual-action ribosomal maturation protein DarP from Burkholderia cenocepacia (strain ATCC BAA-245 / DSM 16553 / LMG 16656 / NCTC 13227 / J2315 / CF5610) (Burkholderia cepacia (strain J2315)).